Reading from the N-terminus, the 62-residue chain is Photosystem II reaction center protein Z (62 aa).

The next 2 membrane-spanning stretches (helical) occupy residues 8-28 (TLLAFIGLSLALVIGVPVLLA) and 41-61 (FSGSALWMLLVFVVGALNSFV).

The protein belongs to the PsbZ family. As to quaternary structure, PSII is composed of 1 copy each of membrane proteins PsbA, PsbB, PsbC, PsbD, PsbE, PsbF, PsbH, PsbI, PsbJ, PsbK, PsbL, PsbM, PsbT, PsbY, PsbZ, Psb30/Ycf12, at least 3 peripheral proteins of the oxygen-evolving complex and a large number of cofactors. It forms dimeric complexes.

Its subcellular location is the plastid. The protein localises to the chloroplast thylakoid membrane. Functionally, may control the interaction of photosystem II (PSII) cores with the light-harvesting antenna, regulates electron flow through the 2 photosystem reaction centers. PSII is a light-driven water plastoquinone oxidoreductase, using light energy to abstract electrons from H(2)O, generating a proton gradient subsequently used for ATP formation. In Ostreococcus tauri, this protein is Photosystem II reaction center protein Z.